The chain runs to 344 residues: Probable dual-specificity RNA methyltransferase RlmN (344 aa).

Catalysis depends on Glu92, which acts as the Proton acceptor. Positions 98–325 (DEDRATLCVS…TTIRASRGED (228 aa)) constitute a Radical SAM core domain. Residues Cys105 and Cys330 are joined by a disulfide bond. 3 residues coordinate [4Fe-4S] cluster: Cys112, Cys116, and Cys119. S-adenosyl-L-methionine is bound by residues 157–158 (GE), Ser189, 211–213 (SLH), and His287. Residue Cys330 is the S-methylcysteine intermediate of the active site.

It belongs to the radical SAM superfamily. RlmN family. [4Fe-4S] cluster is required as a cofactor.

It is found in the cytoplasm. The enzyme catalyses adenosine(2503) in 23S rRNA + 2 reduced [2Fe-2S]-[ferredoxin] + 2 S-adenosyl-L-methionine = 2-methyladenosine(2503) in 23S rRNA + 5'-deoxyadenosine + L-methionine + 2 oxidized [2Fe-2S]-[ferredoxin] + S-adenosyl-L-homocysteine. The catalysed reaction is adenosine(37) in tRNA + 2 reduced [2Fe-2S]-[ferredoxin] + 2 S-adenosyl-L-methionine = 2-methyladenosine(37) in tRNA + 5'-deoxyadenosine + L-methionine + 2 oxidized [2Fe-2S]-[ferredoxin] + S-adenosyl-L-homocysteine. In terms of biological role, specifically methylates position 2 of adenine 2503 in 23S rRNA and position 2 of adenine 37 in tRNAs. The polypeptide is Probable dual-specificity RNA methyltransferase RlmN (Bacteroides fragilis (strain YCH46)).